The chain runs to 626 residues: Chaperone protein HtpG (626 aa).

The a; substrate-binding stretch occupies residues 1 to 341 (MRKKKFKAES…SEDLSLNISR (341 aa)). A b region spans residues 342–552 (EMLQHDRQLK…DGEVTIEMEK (211 aa)). The segment at 553 to 626 (VLNAMPDSQQ…FTNDICKVMV (74 aa)) is c.

It belongs to the heat shock protein 90 family. Homodimer.

It localises to the cytoplasm. Molecular chaperone. Has ATPase activity. The sequence is that of Chaperone protein HtpG from Bacillus velezensis (strain DSM 23117 / BGSC 10A6 / LMG 26770 / FZB42) (Bacillus amyloliquefaciens subsp. plantarum).